A 590-amino-acid chain; its full sequence is G protein-coupled receptor kinase 5 (590 aa).

The tract at residues 1-185 (MELENIVANT…LERQPVTKNT (185 aa)) is N-terminal. The interval 20–39 (GGKRKGKSKKWKEILKFPHI) is interaction with calmodulin. The RGS domain maps to 53-171 (YYSLCDKQPI…LDSMYFDRFL (119 aa)). Phosphoserine is present on serine 136. A Protein kinase domain is found at 186-448 (FRQYRVLGKG…AAEVKRHPFF (263 aa)). ATP-binding positions include 192–200 (LGKGGFGEV) and lysine 215. Aspartate 311 (proton acceptor) is an active-site residue. The short motif at 388-395 (RKEKVKRE) is the Nuclear localization signal element. Positions 449 to 514 (RNMNFKRLEA…GSVPIPWQNE (66 aa)) constitute an AGC-kinase C-terminal domain. Position 484 is a phosphoserine; by autocatalysis (serine 484). Phosphothreonine; by autocatalysis is present on threonine 485. Positions 546-565 (PKKGLFHRLFRRQHQSNSKS) are sufficient for membrane localization. The segment at 557-590 (RQHQSNSKSSPTPKTSCNHRINSNHINSNSTGSS) is disordered. The span at 561-590 (SNSKSSPTPKTSCNHRINSNHINSNSTGSS) shows a compositional bias: low complexity. The residue at position 579 (serine 579) is a Phosphoserine.

Belongs to the protein kinase superfamily. AGC Ser/Thr protein kinase family. GPRK subfamily. As to quaternary structure, interacts with ST13 (via the C-terminus 303-319 AA). Interacts with TP53/p53. Interacts with HTR4 (via C-terminus 330-346 AA); this interaction is promoted by 5-HT (serotonin). Interacts with HDAC5. Interacts with GIT1. Post-translationally, autophosphorylated. Autophosphorylation may play a critical role in the regulation of GRK5 kinase activity.

It is found in the cytoplasm. The protein localises to the nucleus. Its subcellular location is the cell membrane. The enzyme catalyses [G-protein-coupled receptor] + ATP = [G-protein-coupled receptor]-phosphate + ADP + H(+). Its activity is regulated as follows. Inhibited by calmodulin with an IC(50) of 50 nM. Calmodulin inhibits GRK5 association with receptor and phospholipid. In terms of biological role, serine/threonine kinase that phosphorylates preferentially the activated forms of a variety of G-protein-coupled receptors (GPCRs). Such receptor phosphorylation initiates beta-arrestin-mediated receptor desensitization, internalization, and signaling events leading to their down-regulation. Phosphorylates a variety of GPCRs, including adrenergic receptors, muscarinic acetylcholine receptors (more specifically Gi-coupled M2/M4 subtypes), dopamine receptors and opioid receptors. In addition to GPCRs, also phosphorylates various substrates: Hsc70-interacting protein/ST13, TP53/p53, HDAC5, and arrestin-1/ARRB1. Phosphorylation of ARRB1 by GRK5 inhibits G-protein independent MAPK1/MAPK3 signaling downstream of 5HT4-receptors. Phosphorylation of HDAC5, a repressor of myocyte enhancer factor 2 (MEF2) leading to nuclear export of HDAC5 and allowing MEF2-mediated transcription. Phosphorylation of TP53/p53, a crucial tumor suppressor, inhibits TP53/p53-mediated apoptosis. Phosphorylation of ST13 regulates internalization of the chemokine receptor. Phosphorylates rhodopsin (RHO) (in vitro) and a non G-protein-coupled receptor, LRP6 during Wnt signaling (in vitro). This Mus musculus (Mouse) protein is G protein-coupled receptor kinase 5 (Grk5).